Reading from the N-terminus, the 228-residue chain is UPF0758 protein SAB1521c (228 aa).

An MPN domain is found at 102–224; sequence KITQPSDVAD…FTSLVEAGYF (123 aa). H173, H175, and D186 together coordinate Zn(2+). The short motif at 173 to 186 is the JAMM motif element; it reads HNHPSGDVTPSQED.

It belongs to the UPF0758 family.

The polypeptide is UPF0758 protein SAB1521c (Staphylococcus aureus (strain bovine RF122 / ET3-1)).